The following is a 509-amino-acid chain: Zinc finger protein Aiolos (509 aa).

Residues 1-85 (MEDIKPNVEL…PMGNAEEPEI (85 aa)) form a disordered region. Positions 10–20 (LKSTQEQSVPT) are enriched in polar residues. A Phosphothreonine modification is found at Thr20. The span at 56–72 (DSMKVKDEYSERDENVL) shows a compositional bias: basic and acidic residues. Glycyl lysine isopeptide (Lys-Gly) (interchain with G-Cter in SUMO2) cross-links involve residues Lys61, Lys73, and Lys100. 3 consecutive C2H2-type zinc fingers follow at residues 118 to 140 (MNCD…KRSH), 146 to 168 (FQCN…IKLH), and 174 to 196 (FKCH…LRTH). A C2H2-type 4; atypical zinc finger spans residues 202–224 (YKCEFCGRSYKQRSSLEEHKERC). A Glycyl lysine isopeptide (Lys-Gly) (interchain with G-Cter in SUMO2) cross-link involves residue Lys245. Thr326 is subject to Phosphothreonine. A disordered region spans residues 365-421 (HLPEKSLPSERGLSPTNSGHDSTDTDSNHEERQNHIYQQNPMVPPRARNGMPLLKEG). A Phosphoserine modification is found at Ser378. Residues 385–398 (DSTDTDSNHEERQN) are compositionally biased toward basic and acidic residues. The C2H2-type 5 zinc finger occupies 452–474 (YRCDHCRVLFLDYVMFTIHMGCH). The interval 452–504 (YRCDHCRVLFLDYVMFTIHMGCHGFRDPFECNMCGYRSHDRYEFSSHIARGEH) is mediates homodimerization and heterodimerization. The segment at 480 to 504 (FECNMCGYRSHDRYEFSSHIARGEH) adopts a C2H2-type 6; atypical zinc-finger fold.

It belongs to the Ikaros C2H2-type zinc-finger protein family. In terms of assembly, homodimer. Heterodimer with other IKAROS family members. Interacts with IKZF4 and IKZF5. Interacts with IKZF1. Interacts with HRAS. Interacts with FOXP3; this interaction may be required for silencing target genes and regulating the suppressive activity of FOXP3-positive regulatory T-cells (Treg). Interacts with BCL21L; this interaction blocks the anti-apoptotic role of BCL21L. Associates with histone deacetylase complexes containing HDAC1, MTA2 and SIN3A.

It is found in the nucleus. The protein localises to the cytoplasm. In terms of biological role, transcription factor that plays an important role in the regulation of lymphocyte differentiation. Plays an essential role in regulation of B-cell differentiation, proliferation and maturation to an effector state. Involved in regulating BCL2 expression and controlling apoptosis in T-cells in an IL2-dependent manner. The chain is Zinc finger protein Aiolos (IKZF3) from Bos taurus (Bovine).